The sequence spans 355 residues: 3'-5' exonuclease (355 aa).

A disordered region spans residues 1–121; it reads MDKYLIKLPN…PSPEKEKPEK (121 aa). Basic and acidic residues-rich tracts occupy residues 17–29, 36–50, and 72–92; these read VSDKKEVVKKETP, AKKDTPKQEKEKENT, and KNLDTPEVTQEKESVESENPP. Residues S105 and S113 each carry the phosphoserine modification. The 3'-5' exonuclease domain maps to 147–315; that stretch reads VMQWVEKQKE…GQVIYRDLEQ (169 aa). Mg(2+)-binding residues include D164, E166, and D302.

This sequence belongs to the WRNexo family.

It localises to the nucleus. In terms of biological role, has exonuclease activity on both single-stranded and duplex templates bearing overhangs, but not blunt ended duplex DNA, and cleaves in a 3'-5' direction. Essential for the formation of DNA replication focal centers. Has an important role in maintaining genome stability. In Drosophila ananassae (Fruit fly), this protein is 3'-5' exonuclease.